We begin with the raw amino-acid sequence, 463 residues long: Glutamate--tRNA ligase 2 (463 aa).

A 'HIGH' region motif is present at residues 10 to 20 (PSPTGFLHIGS). The 'KMSKS' region motif lies at 239–243 (KLSKR). ATP is bound at residue K242.

This sequence belongs to the class-I aminoacyl-tRNA synthetase family. Glutamate--tRNA ligase type 1 subfamily. Monomer.

The protein localises to the cytoplasm. It carries out the reaction tRNA(Glu) + L-glutamate + ATP = L-glutamyl-tRNA(Glu) + AMP + diphosphate. Its function is as follows. Catalyzes the attachment of glutamate to tRNA(Glu) in a two-step reaction: glutamate is first activated by ATP to form Glu-AMP and then transferred to the acceptor end of tRNA(Glu). This is Glutamate--tRNA ligase 2 from Rickettsia akari (strain Hartford).